A 428-amino-acid chain; its full sequence is Gamma-glutamyl phosphate reductase (428 aa).

It belongs to the gamma-glutamyl phosphate reductase family.

Its subcellular location is the cytoplasm. The catalysed reaction is L-glutamate 5-semialdehyde + phosphate + NADP(+) = L-glutamyl 5-phosphate + NADPH + H(+). It participates in amino-acid biosynthesis; L-proline biosynthesis; L-glutamate 5-semialdehyde from L-glutamate: step 2/2. In terms of biological role, catalyzes the NADPH-dependent reduction of L-glutamate 5-phosphate into L-glutamate 5-semialdehyde and phosphate. The product spontaneously undergoes cyclization to form 1-pyrroline-5-carboxylate. This Treponema pallidum (strain Nichols) protein is Gamma-glutamyl phosphate reductase.